The primary structure comprises 230 residues: N-(5'-phosphoribosyl)anthranilate isomerase (230 aa).

It belongs to the TrpF family.

It catalyses the reaction N-(5-phospho-beta-D-ribosyl)anthranilate = 1-(2-carboxyphenylamino)-1-deoxy-D-ribulose 5-phosphate. The protein operates within amino-acid biosynthesis; L-tryptophan biosynthesis; L-tryptophan from chorismate: step 3/5. This Ralstonia nicotianae (strain ATCC BAA-1114 / GMI1000) (Ralstonia solanacearum) protein is N-(5'-phosphoribosyl)anthranilate isomerase.